The sequence spans 40 residues: Dolichyl-diphosphooligosaccharide--protein glycosyltransferase subunit 4 (40 aa).

Residues 1–4 (MITD) are Lumenal-facing. A helical membrane pass occupies residues 5 to 25 (VQLAIFSNVLGVFLFLLVVAY). Residues 26-40 (HYINANTGKIGPKAK) are Cytoplasmic-facing.

The protein belongs to the OST4 family. Component of the oligosaccharyltransferase (OST) complex.

Its subcellular location is the endoplasmic reticulum membrane. Its function is as follows. Subunit of the oligosaccharyl transferase (OST) complex that catalyzes the initial transfer of a defined glycan (Glc(3)Man(9)GlcNAc(2) in eukaryotes) from the lipid carrier dolichol-pyrophosphate to an asparagine residue within an Asn-X-Ser/Thr consensus motif in nascent polypeptide chains, the first step in protein N-glycosylation. N-glycosylation occurs cotranslationally and the complex associates with the Sec61 complex at the channel-forming translocon complex that mediates protein translocation across the endoplasmic reticulum (ER). All subunits are required for a maximal enzyme activity. This Drosophila willistoni (Fruit fly) protein is Dolichyl-diphosphooligosaccharide--protein glycosyltransferase subunit 4.